The primary structure comprises 180 residues: CDP-archaeol synthase (180 aa).

The next 5 membrane-spanning stretches (helical) occupy residues 5–25, 54–74, 78–98, 118–138, and 142–162; these read LVAT…AAVL, AVGT…AEPA, LGVD…FGAM, AFPG…VFVV, and WALA…TPIL.

The protein belongs to the CDP-archaeol synthase family. It depends on Mg(2+) as a cofactor.

It is found in the cell membrane. The catalysed reaction is 2,3-bis-O-(geranylgeranyl)-sn-glycerol 1-phosphate + CTP + H(+) = CDP-2,3-bis-O-(geranylgeranyl)-sn-glycerol + diphosphate. It participates in membrane lipid metabolism; glycerophospholipid metabolism. Catalyzes the formation of CDP-2,3-bis-(O-geranylgeranyl)-sn-glycerol (CDP-archaeol) from 2,3-bis-(O-geranylgeranyl)-sn-glycerol 1-phosphate (DGGGP) and CTP. This reaction is the third ether-bond-formation step in the biosynthesis of archaeal membrane lipids. This is CDP-archaeol synthase from Halorubrum lacusprofundi (strain ATCC 49239 / DSM 5036 / JCM 8891 / ACAM 34).